The sequence spans 170 residues: Adenine phosphoribosyltransferase (170 aa).

This sequence belongs to the purine/pyrimidine phosphoribosyltransferase family. In terms of assembly, homodimer.

The protein resides in the cytoplasm. The enzyme catalyses AMP + diphosphate = 5-phospho-alpha-D-ribose 1-diphosphate + adenine. The protein operates within purine metabolism; AMP biosynthesis via salvage pathway; AMP from adenine: step 1/1. Functionally, catalyzes a salvage reaction resulting in the formation of AMP, that is energically less costly than de novo synthesis. The sequence is that of Adenine phosphoribosyltransferase from Mycoplasmopsis pulmonis (strain UAB CTIP) (Mycoplasma pulmonis).